Here is a 463-residue protein sequence, read N- to C-terminus: GTPase Der (463 aa).

A disordered region spans residues methionine 1–lysine 20. EngA-type G domains are found at residues glycine 27–glutamate 190 and arginine 202–aspartate 375. GTP is bound by residues glycine 33–serine 40, aspartate 80–tryptophan 84, asparagine 142–aspartate 145, glycine 208–serine 215, aspartate 255–isoleucine 259, and asparagine 320–aspartate 323. Positions glutamine 376–glutamate 458 constitute a KH-like domain.

This sequence belongs to the TRAFAC class TrmE-Era-EngA-EngB-Septin-like GTPase superfamily. EngA (Der) GTPase family. Associates with the 50S ribosomal subunit.

In terms of biological role, GTPase that plays an essential role in the late steps of ribosome biogenesis. This is GTPase Der from Bifidobacterium longum (strain NCC 2705).